The following is a 272-amino-acid chain: MTFIQQLEHAWAAGNTLLQVGLDPDPQRFPRELEGKPDAIFQFCREIVDATAPYACSFKPQIAYFAAHRAEDQLEALCAHIRAAHPHLPIVLDAKRGDIGTTAEHYAREAYERYGAHAMTVNPYMGLDSVEPYLGWKDRGVIVLCRTSNPGGSDLQFLKLDNGEPLYLHVAGMVADKWNADGQCGLVVGATFPNELAAVRQRIGDAMPLLVPGIGAQGGDVTATVNAGRNAAGTGMMINSSRAILYASGGDDWRQAAADAARDLRDAINGVR.

Lysine 95 functions as the Proton donor in the catalytic mechanism.

Belongs to the OMP decarboxylase family. Type 2 subfamily.

The enzyme catalyses orotidine 5'-phosphate + H(+) = UMP + CO2. It participates in pyrimidine metabolism; UMP biosynthesis via de novo pathway; UMP from orotate: step 2/2. This is Orotidine 5'-phosphate decarboxylase from Bordetella petrii (strain ATCC BAA-461 / DSM 12804 / CCUG 43448).